Consider the following 166-residue polypeptide: Protein-export protein SecB (166 aa).

It belongs to the SecB family. In terms of assembly, homotetramer, a dimer of dimers. One homotetramer interacts with 1 SecA dimer.

It is found in the cytoplasm. One of the proteins required for the normal export of preproteins out of the cell cytoplasm. It is a molecular chaperone that binds to a subset of precursor proteins, maintaining them in a translocation-competent state. It also specifically binds to its receptor SecA. This Cereibacter sphaeroides (strain ATCC 17025 / ATH 2.4.3) (Rhodobacter sphaeroides) protein is Protein-export protein SecB.